An 88-amino-acid polypeptide reads, in one-letter code: Kunitz-type U15-theraphotoxin-Hhn1m (88 aa).

Positions 1–27 are cleaved as a signal peptide; that stretch reads MGIARILSAVLFLSVLFVVTFPTLLSA. Residues 28–33 constitute a propeptide that is removed on maturation; it reads DHHDGR. Residues 37–85 enclose the BPTI/Kunitz inhibitor domain; the sequence is CRLPSDRGRCKASFERWYFNGTTCAKFVYGGYGGNDNRFPTEKACMKRC. Intrachain disulfides connect Cys37-Cys85 and Cys60-Cys81.

The protein belongs to the venom Kunitz-type family. 01 (intermediate) subfamily. In terms of tissue distribution, expressed by the venom gland.

Its subcellular location is the secreted. Functionally, serine protease inhibitor that inhibits trypsin at a molar ratio of 1:1. This is Kunitz-type U15-theraphotoxin-Hhn1m from Cyriopagopus hainanus (Chinese bird spider).